A 507-amino-acid chain; its full sequence is MVTMRADEISNIIRERIEQYNREVKVVNTGTVLQVGDGIARIHGLDEVMAGELVEFEEGTIGIALNLESNNVGVVLMGDGLMIQEGSSVKATGRIAQIPVSEAYLGRVINALAKPIDGRGEISAYESRLIESPAPGIISRRSVYEPLQTGLIAIDSMIPIGRGQRELIIGDRQTGKTAVATDTILNQKGQNVICVYVAIGQKASSVAQVVTTFQERGAMEYTIVVAEMADSPATLQYLAPYTGAALAEYFMYRERHTSIIYDDPSKQAQAYRQMSLLLRRPPGREAYPGDVFYLHSRLLERAAKLSSRLGEGSMTALPIVETQSGDVSAYIPTNVISITDGQIFLSADLFNAGIRPAINVGISVSRVGSAAQIKAMKQVAGKSKLELAQFAELEAFAQFASDLDKATQNQLARGQRLRELLKQSQSAPLTVEEQIVTIYTGANGYLDSLEIGQVKKFLVQLRTYLKTNKPQFQEIISSTRTFTEQAEALLKEIIQEQIELFLLQEQT.

170 to 177 serves as a coordination point for ATP; that stretch reads GDRQTGKT.

It belongs to the ATPase alpha/beta chains family. As to quaternary structure, F-type ATPases have 2 components, CF(1) - the catalytic core - and CF(0) - the membrane proton channel. CF(1) has five subunits: alpha(3), beta(3), gamma(1), delta(1), epsilon(1). CF(0) has four main subunits: a, b, b' and c.

The protein localises to the plastid. Its subcellular location is the chloroplast thylakoid membrane. The catalysed reaction is ATP + H2O + 4 H(+)(in) = ADP + phosphate + 5 H(+)(out). Produces ATP from ADP in the presence of a proton gradient across the membrane. The alpha chain is a regulatory subunit. This chain is ATP synthase subunit alpha, chloroplastic, found in Chloranthus spicatus (Chulantree).